The following is a 522-amino-acid chain: Aspartic and glutamic acid-rich protein (522 aa).

The first 16 residues, 1 to 16 (MKVFVYLLVTFSLTNA), serve as a signal peptide directing secretion. Composition is skewed to basic and acidic residues over residues 72-81 (YDDFFPKDTS) and 93-102 (SRNDDGYDLA). Residues 72–497 (YDDFFPKDTS…KSKDAAQGNI (426 aa)) form a disordered region. Residues 109–125 (DDEEAYDDFDEVDDRAD) are compositionally biased toward acidic residues. Residues 142–152 (KLPAEEESKND) are compositionally biased toward basic and acidic residues. 4 stretches are compositionally biased toward acidic residues: residues 153–166 (MDEETFEDEPEEDK), 173–200 (FAEDERADEREDDDADFDFNDEEDEDEV), 228–261 (DNEEEYADESDDEAEEDSEETADDFEDDPEDESD), and 267–283 (EVEDESEENYQDDTEEG). Over residues 284–343 (SEIKQNDETEEQPEKKFDADKEHEDAPEPLKEKLSDESKARAEDESDKSEDAAKEIKEPE) the composition is skewed to basic and acidic residues. Residues 319 to 465 (DESKARAEDE…KSNLALKRDE (147 aa)) adopt a coiled-coil conformation. Over residues 358-374 (DEAELLDDEAELSDDEA) the composition is skewed to acidic residues. 3 stretches are compositionally biased toward basic and acidic residues: residues 375-397 (ELSKDEAEQSSDEAEKSEDKAEK), 407-453 (DEAK…EFAK), and 461-491 (LKRDENRPLAKGLRESAAHLRDFPSEKKSKD).

Component of the acid-soluble organic matrix of the aragonitic skeleton (at protein level).

It is found in the secreted. The chain is Aspartic and glutamic acid-rich protein from Acropora millepora (Staghorn coral).